Here is a 179-residue protein sequence, read N- to C-terminus: uncharacterized protein (179 aa).

Positions 139–172 (IEDLGKYIKSDRIEKEALREELEKILNTLVKHLE) form a coiled coil.

This is an uncharacterized protein from Methanocaldococcus jannaschii (strain ATCC 43067 / DSM 2661 / JAL-1 / JCM 10045 / NBRC 100440) (Methanococcus jannaschii).